Here is a 566-residue protein sequence, read N- to C-terminus: Proline--tRNA ligase (566 aa).

It belongs to the class-II aminoacyl-tRNA synthetase family. ProS type 1 subfamily. In terms of assembly, homodimer.

The protein localises to the cytoplasm. It catalyses the reaction tRNA(Pro) + L-proline + ATP = L-prolyl-tRNA(Pro) + AMP + diphosphate. In terms of biological role, catalyzes the attachment of proline to tRNA(Pro) in a two-step reaction: proline is first activated by ATP to form Pro-AMP and then transferred to the acceptor end of tRNA(Pro). As ProRS can inadvertently accommodate and process non-cognate amino acids such as alanine and cysteine, to avoid such errors it has two additional distinct editing activities against alanine. One activity is designated as 'pretransfer' editing and involves the tRNA(Pro)-independent hydrolysis of activated Ala-AMP. The other activity is designated 'posttransfer' editing and involves deacylation of mischarged Ala-tRNA(Pro). The misacylated Cys-tRNA(Pro) is not edited by ProRS. The protein is Proline--tRNA ligase of Staphylococcus saprophyticus subsp. saprophyticus (strain ATCC 15305 / DSM 20229 / NCIMB 8711 / NCTC 7292 / S-41).